Here is a 195-residue protein sequence, read N- to C-terminus: dCTP deaminase (195 aa).

DCTP is bound by residues 110–115, Asp128, 136–138, Tyr171, Lys178, and Gln182; these read RSSLAR and VLE. The Proton donor/acceptor role is filled by Glu138.

This sequence belongs to the dCTP deaminase family. Homotrimer.

The enzyme catalyses dCTP + H2O + H(+) = dUTP + NH4(+). It participates in pyrimidine metabolism; dUMP biosynthesis; dUMP from dCTP (dUTP route): step 1/2. In terms of biological role, catalyzes the deamination of dCTP to dUTP. The sequence is that of dCTP deaminase from Idiomarina loihiensis (strain ATCC BAA-735 / DSM 15497 / L2-TR).